We begin with the raw amino-acid sequence, 127 residues long: Small ribosomal subunit protein uS11 (127 aa).

It belongs to the universal ribosomal protein uS11 family. Part of the 30S ribosomal subunit. Interacts with proteins S7 and S18. Binds to IF-3.

Functionally, located on the platform of the 30S subunit, it bridges several disparate RNA helices of the 16S rRNA. Forms part of the Shine-Dalgarno cleft in the 70S ribosome. The sequence is that of Small ribosomal subunit protein uS11 from Chlorobium chlorochromatii (strain CaD3).